A 359-amino-acid polypeptide reads, in one-letter code: Phosphate acyltransferase (359 aa).

The segment at 337 to 359 (AAGAAQPAPETEVPGAHPSPHVA) is disordered.

Belongs to the PlsX family. In terms of assembly, homodimer. Probably interacts with PlsY.

Its subcellular location is the cytoplasm. The catalysed reaction is a fatty acyl-[ACP] + phosphate = an acyl phosphate + holo-[ACP]. Its pathway is lipid metabolism; phospholipid metabolism. In terms of biological role, catalyzes the reversible formation of acyl-phosphate (acyl-PO(4)) from acyl-[acyl-carrier-protein] (acyl-ACP). This enzyme utilizes acyl-ACP as fatty acyl donor, but not acyl-CoA. This chain is Phosphate acyltransferase, found in Cupriavidus necator (strain ATCC 17699 / DSM 428 / KCTC 22496 / NCIMB 10442 / H16 / Stanier 337) (Ralstonia eutropha).